The primary structure comprises 124 residues: Large ribosomal subunit protein bL12 (124 aa).

The disordered stretch occupies residues 94–124; the sequence is APKPVKESVPKAAAEEAKKKLEEAGAKAEIK.

Belongs to the bacterial ribosomal protein bL12 family. In terms of assembly, homodimer. Part of the ribosomal stalk of the 50S ribosomal subunit. Forms a multimeric L10(L12)X complex, where L10 forms an elongated spine to which 2 to 4 L12 dimers bind in a sequential fashion. Binds GTP-bound translation factors.

Functionally, forms part of the ribosomal stalk which helps the ribosome interact with GTP-bound translation factors. Is thus essential for accurate translation. In Paraburkholderia phytofirmans (strain DSM 17436 / LMG 22146 / PsJN) (Burkholderia phytofirmans), this protein is Large ribosomal subunit protein bL12.